The chain runs to 237 residues: DNA repair protein RecO (237 aa).

Belongs to the RecO family.

In terms of biological role, involved in DNA repair and RecF pathway recombination. This Rickettsia akari (strain Hartford) protein is DNA repair protein RecO.